A 1029-amino-acid polypeptide reads, in one-letter code: Serine/threonine-protein kinase KSP1 (1029 aa).

The 334-residue stretch at 18 to 351 folds into the Protein kinase domain; it reads YQKIEDISEG…TELQNLSEYT (334 aa). ATP contacts are provided by residues 27-35 and K47; that span reads GSYGYVSLA. Acidic residues predominate over residues 56-79; the sequence is GQYDGPQDDENDCDSSDCDDDEDT. The segment at 56 to 105 is disordered; that stretch reads GQYDGPQDDENDCDSSDCDDDEDTKVDTDRHENENGNASSNNGSSREKKH. A compositionally biased stretch (basic and acidic residues) spans 80–89; the sequence is KVDTDRHENE. Residues 90–99 show a composition bias toward low complexity; the sequence is NGNASSNNGS. The active-site Proton acceptor is D207. Residues 377–397 are disordered; the sequence is VPPSSAPVSLPTPISSSNKQH. S416 and S419 each carry phosphoserine. T501, T504, and T526 each carry phosphothreonine. S529 bears the Phosphoserine mark. A disordered region spans residues 532 to 570; sequence HRYMEGFSNNNNKQYRQNRNYNNNNNNSNNNHGSNYNNF. Positions 538-570 are enriched in low complexity; that stretch reads FSNNNNKQYRQNRNYNNNNNNSNNNHGSNYNNF. At S646 the chain carries Phosphoserine. The tract at residues 732 to 824 is disordered; that stretch reads STNHNNNGNN…SDSKELEQER (93 aa). Positions 734–743 are enriched in low complexity; that stretch reads NHNNNGNNNH. A compositionally biased stretch (polar residues) spans 744-754; the sequence is IDTNSTTNQYH. Basic and acidic residues predominate over residues 813-824; the sequence is HSSDSKELEQER. Phosphoserine is present on residues S845 and S884. Residues 949 to 978 form a disordered region; that stretch reads EYEGESDKMAHGKMEGGDNESSSTSPDERQ. Over residues 953-964 the composition is skewed to basic and acidic residues; it reads ESDKMAHGKMEG. The residue at position 1005 (T1005) is a Phosphothreonine. S1014 is modified (phosphoserine).

It belongs to the protein kinase superfamily. Ser/Thr protein kinase family. CK2 subfamily. Post-translationally, phosphorylated by PKA in a TORC1-dependent manner. Phosphorylation at PKA consensus sites RRxS/T decreases upon rapamycin treatment.

Its subcellular location is the nucleus. It catalyses the reaction L-seryl-[protein] + ATP = O-phospho-L-seryl-[protein] + ADP + H(+). The enzyme catalyses L-threonyl-[protein] + ATP = O-phospho-L-threonyl-[protein] + ADP + H(+). Functionally, may act on PRP20. In Saccharomyces cerevisiae (strain ATCC 204508 / S288c) (Baker's yeast), this protein is Serine/threonine-protein kinase KSP1 (KSP1).